We begin with the raw amino-acid sequence, 186 residues long: Peptidyl-tRNA hydrolase (186 aa).

TRNA is bound at residue Y14. H19 functions as the Proton acceptor in the catalytic mechanism. Y61, N63, and N107 together coordinate tRNA.

The protein belongs to the PTH family. In terms of assembly, monomer.

It is found in the cytoplasm. The catalysed reaction is an N-acyl-L-alpha-aminoacyl-tRNA + H2O = an N-acyl-L-amino acid + a tRNA + H(+). Hydrolyzes ribosome-free peptidyl-tRNAs (with 1 or more amino acids incorporated), which drop off the ribosome during protein synthesis, or as a result of ribosome stalling. In terms of biological role, catalyzes the release of premature peptidyl moieties from peptidyl-tRNA molecules trapped in stalled 50S ribosomal subunits, and thus maintains levels of free tRNAs and 50S ribosomes. The sequence is that of Peptidyl-tRNA hydrolase from Helicobacter pylori (strain P12).